We begin with the raw amino-acid sequence, 201 residues long: 3-isopropylmalate dehydratase small subunit (201 aa).

This sequence belongs to the LeuD family. LeuD type 1 subfamily. Heterodimer of LeuC and LeuD.

The catalysed reaction is (2R,3S)-3-isopropylmalate = (2S)-2-isopropylmalate. Its pathway is amino-acid biosynthesis; L-leucine biosynthesis; L-leucine from 3-methyl-2-oxobutanoate: step 2/4. Functionally, catalyzes the isomerization between 2-isopropylmalate and 3-isopropylmalate, via the formation of 2-isopropylmaleate. The protein is 3-isopropylmalate dehydratase small subunit of Salmonella arizonae (strain ATCC BAA-731 / CDC346-86 / RSK2980).